Here is a 314-residue protein sequence, read N- to C-terminus: Nodulation protein D 2 (314 aa).

The 58-residue stretch at Leu-6–Thr-63 folds into the HTH lysR-type domain. The segment at residues Leu-23 to Ala-42 is a DNA-binding region (H-T-H motif).

This sequence belongs to the LysR transcriptional regulatory family.

NodD regulates the expression of the nodABCFE genes which encode other nodulation proteins. NodD is also a negative regulator of its own expression. Binds flavonoids as inducers. In Rhizobium tropici, this protein is Nodulation protein D 2 (nodD2).